Consider the following 748-residue polypeptide: Pleckstrin homology domain-containing family M member 3 (748 aa).

Disordered regions lie at residues 88–107 (HAKEQNESTKRTYSDDPLLS) and 129–187 (NDSL…RNKN). Composition is skewed to basic and acidic residues over residues 129-140 (NDSLDHLEDAPK) and 148-159 (SRSDVSHIDWKN). The segment covering 167-180 (QRSSSQGMHCTSPF) has biased composition (polar residues). PH domains lie at 200 to 297 (NILK…EAIC) and 348 to 443 (NIIK…SAAN). The Phorbol-ester/DAG-type zinc-finger motif lies at 656-709 (SHVYSCSLCSQKGFICEICNNGEILYPFEENSTSRCENCGAVFHSDCKVRTVPC).

The protein localises to the cytoplasm. Its subcellular location is the golgi apparatus. It is found in the cell membrane. In terms of biological role, may play a role during muscle differentiation. The protein is Pleckstrin homology domain-containing family M member 3 (plekhm3) of Xenopus laevis (African clawed frog).